We begin with the raw amino-acid sequence, 432 residues long: UDP-N-acetylmuramate--L-alanine ligase (432 aa).

ATP is bound at residue 108 to 114 (GAHGKTS).

This sequence belongs to the MurCDEF family.

It is found in the cytoplasm. It catalyses the reaction UDP-N-acetyl-alpha-D-muramate + L-alanine + ATP = UDP-N-acetyl-alpha-D-muramoyl-L-alanine + ADP + phosphate + H(+). It participates in cell wall biogenesis; peptidoglycan biosynthesis. Its function is as follows. Cell wall formation. This is UDP-N-acetylmuramate--L-alanine ligase from Bacillus velezensis (strain DSM 23117 / BGSC 10A6 / LMG 26770 / FZB42) (Bacillus amyloliquefaciens subsp. plantarum).